The following is a 956-amino-acid chain: Kinesin heavy chain isoform 5C (956 aa).

Residues 8 to 327 enclose the Kinesin motor domain; the sequence is SIKVMCRFRP…LMFGQRAKTI (320 aa). Residues Q87, S89, S90, G91, K92, T93, H94, and K99 each contribute to the ATP site. Positions 174-315 are microtubule-binding; the sequence is VSSPEEVMDV…PSVFNEAETK (142 aa). T403 is subject to Phosphothreonine. Residues 406 to 923 adopt a coiled-coil conformation; the sequence is VDGISAEKEK…RRAHSAQIAK (518 aa). The segment at 859–956 is globular; that stretch reads CELPKLEKRL…GSSNSTHYQK (98 aa). The segment at 910-956 is disordered; the sequence is KNMARRAHSAQIAKPIRPGHYPASSPTAVHAVRGGGGGSSNSTHYQK.

The protein belongs to the TRAFAC class myosin-kinesin ATPase superfamily. Kinesin family. Kinesin subfamily. In terms of assembly, oligomer composed of two heavy chains and two light chains. Interacts with GRIP1. Interacts with KLC3 and TRAK1. Interacts with ZFYVE27.

It localises to the cytoplasm. It is found in the cytoskeleton. The protein localises to the cell projection. Its subcellular location is the dendrite. It catalyses the reaction ATP + H2O = ADP + phosphate + H(+). Its function is as follows. Microtubule-associated force-producing protein that may play a role in organelle transport. Has ATPase activity. Involved in synaptic transmission. Mediates dendritic trafficking of mRNAs. Required for anterograde axonal transportation of MAPK8IP3/JIP3 which is essential for MAPK8IP3/JIP3 function in axon elongation. The sequence is that of Kinesin heavy chain isoform 5C (Kif5c) from Mus musculus (Mouse).